A 398-amino-acid chain; its full sequence is Riboflavin biosynthesis protein RibBA (398 aa).

Positions 1–199 are DHBP synthase; sequence MFHPIEEALD…IKDLIQYRYN (199 aa). D-ribulose 5-phosphate contacts are provided by residues 26–27, Asp31, 138–142, and Glu162; these read RE and RAGHT. Glu27 contacts Mg(2+). His141 lines the Mg(2+) pocket. The interval 200–398 is GTP cyclohydrolase II; it reads LTTLVEREVD…MNKLGHLLHF (199 aa). 251–255 contributes to the GTP binding site; the sequence is RVHSE. Positions 256, 267, and 269 each coordinate Zn(2+). GTP contacts are provided by residues Gln272, 294–296, and Thr316; that span reads EGR. Asp328 functions as the Proton acceptor; for GTP cyclohydrolase activity in the catalytic mechanism. The active-site Nucleophile; for GTP cyclohydrolase activity is Arg330. 2 residues coordinate GTP: Thr351 and Lys356.

In the N-terminal section; belongs to the DHBP synthase family. This sequence in the C-terminal section; belongs to the GTP cyclohydrolase II family. It depends on Mg(2+) as a cofactor. Mn(2+) is required as a cofactor. Zn(2+) serves as cofactor.

It carries out the reaction D-ribulose 5-phosphate = (2S)-2-hydroxy-3-oxobutyl phosphate + formate + H(+). The enzyme catalyses GTP + 4 H2O = 2,5-diamino-6-hydroxy-4-(5-phosphoribosylamino)-pyrimidine + formate + 2 phosphate + 3 H(+). The protein operates within cofactor biosynthesis; riboflavin biosynthesis; 2-hydroxy-3-oxobutyl phosphate from D-ribulose 5-phosphate: step 1/1. It participates in cofactor biosynthesis; riboflavin biosynthesis; 5-amino-6-(D-ribitylamino)uracil from GTP: step 1/4. Catalyzes the conversion of D-ribulose 5-phosphate to formate and 3,4-dihydroxy-2-butanone 4-phosphate. In terms of biological role, catalyzes the conversion of GTP to 2,5-diamino-6-ribosylamino-4(3H)-pyrimidinone 5'-phosphate (DARP), formate and pyrophosphate. The protein is Riboflavin biosynthesis protein RibBA of Bacillus subtilis (strain 168).